The following is a 153-amino-acid chain: 6,7-dimethyl-8-ribityllumazine synthase (153 aa).

5-amino-6-(D-ribitylamino)uracil contacts are provided by residues phenylalanine 21, 55–57, and 79–81; these read AFE and TVI. 84 to 85 serves as a coordination point for (2S)-2-hydroxy-3-oxobutyl phosphate; the sequence is AT. Histidine 87 serves as the catalytic Proton donor. Residue phenylalanine 112 participates in 5-amino-6-(D-ribitylamino)uracil binding. Arginine 126 contributes to the (2S)-2-hydroxy-3-oxobutyl phosphate binding site.

The protein belongs to the DMRL synthase family. As to quaternary structure, forms an icosahedral capsid composed of 60 subunits, arranged as a dodecamer of pentamers.

It catalyses the reaction (2S)-2-hydroxy-3-oxobutyl phosphate + 5-amino-6-(D-ribitylamino)uracil = 6,7-dimethyl-8-(1-D-ribityl)lumazine + phosphate + 2 H2O + H(+). It functions in the pathway cofactor biosynthesis; riboflavin biosynthesis; riboflavin from 2-hydroxy-3-oxobutyl phosphate and 5-amino-6-(D-ribitylamino)uracil: step 1/2. Its function is as follows. Catalyzes the formation of 6,7-dimethyl-8-ribityllumazine by condensation of 5-amino-6-(D-ribitylamino)uracil with 3,4-dihydroxy-2-butanone 4-phosphate. This is the penultimate step in the biosynthesis of riboflavin. This Bacillus cereus (strain 03BB102) protein is 6,7-dimethyl-8-ribityllumazine synthase.